The following is a 120-amino-acid chain: NADH-quinone oxidoreductase subunit A (120 aa).

Helical transmembrane passes span 10 to 30, 65 to 85, and 89 to 109; these read ILVF…MGWF, VAIL…WAVV, and IGWF…VGFI.

This sequence belongs to the complex I subunit 3 family. In terms of assembly, NDH-1 is composed of 14 different subunits. Subunits NuoA, H, J, K, L, M, N constitute the membrane sector of the complex.

It is found in the cell inner membrane. The catalysed reaction is a quinone + NADH + 5 H(+)(in) = a quinol + NAD(+) + 4 H(+)(out). NDH-1 shuttles electrons from NADH, via FMN and iron-sulfur (Fe-S) centers, to quinones in the respiratory chain. The immediate electron acceptor for the enzyme in this species is believed to be ubiquinone. Couples the redox reaction to proton translocation (for every two electrons transferred, four hydrogen ions are translocated across the cytoplasmic membrane), and thus conserves the redox energy in a proton gradient. The sequence is that of NADH-quinone oxidoreductase subunit A from Coxiella burnetii (strain Dugway 5J108-111).